The following is a 148-amino-acid chain: uncharacterized protein (148 aa).

An N-acetyltransferase domain is found at 7 to 148; it reads LEINYKTDEL…HDVLLWKPIR (142 aa).

This is an uncharacterized protein from Staphylococcus aureus (strain Mu50 / ATCC 700699).